The following is a 122-amino-acid chain: Large ribosomal subunit protein uL14 (122 aa).

Belongs to the universal ribosomal protein uL14 family. In terms of assembly, part of the 50S ribosomal subunit. Forms a cluster with proteins L3 and L19. In the 70S ribosome, L14 and L19 interact and together make contacts with the 16S rRNA in bridges B5 and B8.

In terms of biological role, binds to 23S rRNA. Forms part of two intersubunit bridges in the 70S ribosome. The sequence is that of Large ribosomal subunit protein uL14 from Nostoc punctiforme (strain ATCC 29133 / PCC 73102).